Here is a 306-residue protein sequence, read N- to C-terminus: Mitochondrial glycine transporter (306 aa).

Solcar repeat units follow at residues 25 to 114 (QPVI…LKQY), 121 to 205 (PTAL…TKNV), and 217 to 301 (LVPV…MMAK). 6 helical membrane-spanning segments follow: residues 31-56 (FLCG…TRLQ), 89-115 (GMSP…KQYF), 127-152 (VILG…TRYE), 180-203 (GLTA…SQTK), 221-247 (VNFS…KTHM), and 276-294 (GSVP…AWTV).

The protein belongs to the mitochondrial carrier (TC 2.A.29) family. SLC25A38 subfamily.

It localises to the mitochondrion inner membrane. The enzyme catalyses glycine(in) = glycine(out). In terms of biological role, mitochondrial glycine transporter that imports glycine into the mitochondrial matrix. Plays an important role in providing glycine for the first enzymatic step in heme biosynthesis, the condensation of glycine with succinyl-CoA to produce 5-aminolevulinate (ALA) in the mitochondrial matrix. Required during erythropoiesis. Plays a role as pro-apoptotic protein that induces caspase-dependent apoptosis. The protein is Mitochondrial glycine transporter of Ovis aries (Sheep).